The following is a 138-amino-acid chain: uncharacterized protein (138 aa).

One can recognise a MsrB domain in the interval 9 to 133 (EDEWKKELGP…NSASLEFHNE (125 aa)). Zn(2+) is bound by residues cysteine 49, cysteine 52, cysteine 97, and cysteine 100. The active-site Nucleophile is the cysteine 122.

The protein belongs to the MsrB Met sulfoxide reductase family. Requires Zn(2+) as cofactor.

Its subcellular location is the cytoplasm. It is found in the nucleus. This is an uncharacterized protein from Schizosaccharomyces pombe (strain 972 / ATCC 24843) (Fission yeast).